We begin with the raw amino-acid sequence, 284 residues long: Bifunctional protein FolD (284 aa).

NADP(+) contacts are provided by residues 166 to 168 and I232; that span reads GAS.

Belongs to the tetrahydrofolate dehydrogenase/cyclohydrolase family. As to quaternary structure, homodimer.

The enzyme catalyses (6R)-5,10-methylene-5,6,7,8-tetrahydrofolate + NADP(+) = (6R)-5,10-methenyltetrahydrofolate + NADPH. It catalyses the reaction (6R)-5,10-methenyltetrahydrofolate + H2O = (6R)-10-formyltetrahydrofolate + H(+). Its pathway is one-carbon metabolism; tetrahydrofolate interconversion. Functionally, catalyzes the oxidation of 5,10-methylenetetrahydrofolate to 5,10-methenyltetrahydrofolate and then the hydrolysis of 5,10-methenyltetrahydrofolate to 10-formyltetrahydrofolate. This is Bifunctional protein FolD from Shewanella halifaxensis (strain HAW-EB4).